A 314-amino-acid chain; its full sequence is Ribosomal protein L11 methyltransferase (314 aa).

S-adenosyl-L-methionine is bound by residues threonine 164, glycine 185, aspartate 207, and asparagine 249.

This sequence belongs to the methyltransferase superfamily. PrmA family.

The protein resides in the cytoplasm. It catalyses the reaction L-lysyl-[protein] + 3 S-adenosyl-L-methionine = N(6),N(6),N(6)-trimethyl-L-lysyl-[protein] + 3 S-adenosyl-L-homocysteine + 3 H(+). Functionally, methylates ribosomal protein L11. In Clostridium beijerinckii (strain ATCC 51743 / NCIMB 8052) (Clostridium acetobutylicum), this protein is Ribosomal protein L11 methyltransferase.